We begin with the raw amino-acid sequence, 506 residues long: Zinc finger and SCAN domain containing protein 4C (506 aa).

Residues 1–24 form a disordered region; the sequence is MASQQAPAKDLQTNNLEFTPTDSS. The region spanning 37–119 is the SCAN box domain; it reads SAQLNFSPSN…RFMESLTDEC (83 aa). C2H2-type zinc fingers lie at residues 395 to 417, 424 to 446, 452 to 474, and 480 to 503; these read YKCE…QRTH, LLCV…EIIH, FKCS…EMIH, and YVCS…RNYH.

Embryonic stem (ES) cell-specific. Expressed in only 5% of ES cells at a given time, but nearly all ES cells express it at least once during 9 passages.

The protein resides in the nucleus. The protein localises to the chromosome. It is found in the telomere. Functionally, embryonic stem (ES) cell-specific transcription factor required to regulate ES cell pluripotency. Binds telomeres and plays a key role in genomic stability in ES cells by regulating telomere elongation. Acts as an activator of spontaneous telomere sister chromatid exchange (T-SCE) and telomere elongation in undifferentiated ES cells. The sequence is that of Zinc finger and SCAN domain containing protein 4C (Zscan4c) from Mus musculus (Mouse).